Here is a 1096-residue protein sequence, read N- to C-terminus: MSSSGLDEIDLNSLRDPAGIFELIEVVGNGTYGQVYKGRHVKTAQLAAIKIMNINEDEEDEIKLEINMLKKHSHHRNVATYYGAFIKKLPSSTGKHDQLWLVMEFCGSGSITDLVKNTKGGSLKEEWIAYICREILRGLYHLHQSKVIHRDIKGQNVLLTDSAEVKLVDFGVSAQLDKTVGRRNTFIGTPYWMAPEVIACDESPEATYDSRSDLWSLGITALEMAEGHPPLCDMHPMRALFLIPRNPPPKLKRNKKWTKKFETFIETVLVKDYHQRPYTGALLRHPFIKEQPHEQTIRHSIKEHIDRNRRVKKDDADYEYSGSEDDEPSPNNRGPSMGIRDDSESSSMIPMDNTLRKGFQKLQESSRGFAEPGAQQLRRLPQQPAPAPFQYQQSRYVEPRRESSEVKLRAVSSRGAADGPRHSPASRPRPVSHHQRSPQQSHPAAPHLADLANYEKRRRSEREERRERERQAHHAMPIARVSASVPAPQQSRKMSEPLLITHVKPEDLDVLASELSKMGGHHNGRSREESMSPPPPAPPPREASISSITDTIDVGELDNGADAEWDDLKDIMMNGEGTLRGPNKPLPPTPTDGENTLVSDVRRNGNGNSGHGAYKGKKIPEIRPGIISLDDDDSDSDNEEGNEPLMFKPINASSSRGALPDLLPKSPQLRRQINDQTRQMSDDRADESASLFGSFYQPNGFQNSDSRSSIQHSFSNRDREKSFVGYFGGGAGAGGGTVNRPGRPQDINQVQVNVTPNSNGTPAENDAPEIRKYKKKFSGEILCAALWGVNLLIGTDSGLMLLDRSGQGKVYPLISRRRFDQMTVLEGQNILATISGRKRRIRVYYLSWLRQKILRTEGAGSANTTEKRNGWVNVGDLQGAIHFKIVRYERIKFLVVGLESSIEIYAWAPKPYHKFMSFKSFGSLSHVPLIVDLTVEDNARLKVLYGSTGGFHAIDLDSAAVYDIYTPAQSGQTTTPHCIVVLPNSNGMQLLLCYDNEGVYVNTYGRMTKNVVLQWGEMPSSVAYISTGQIMGWGNKAIEIRSVDTGHLDGVFMHKKAQKLKFLCERNDKVFFSSAKGGGSCQIYFMTLNKPGLTNW.

Positions 21 to 288 (FELIEVVGNG…TGALLRHPFI (268 aa)) constitute a Protein kinase domain. ATP contacts are provided by residues 27-35 (VGNGTYGQV) and K50. Catalysis depends on D151, which acts as the Proton acceptor. Residues 293–315 (HEQTIRHSIKEHIDRNRRVKKDD) show a composition bias toward basic and acidic residues. 4 disordered regions span residues 293-351 (HEQT…MIPM), 380-492 (LPQQ…QQSR), 517-545 (KMGGHHNGRSREESMSPPPPAPPPREASI), and 574-664 (NGEG…DLLP). Positions 316–328 (ADYEYSGSEDDEP) are enriched in acidic residues. Over residues 380 to 393 (LPQQPAPAPFQYQQ) the composition is skewed to low complexity. 2 stretches are compositionally biased toward basic and acidic residues: residues 397–408 (VEPRRESSEVKL) and 453–472 (NYEKRRRSEREERRERERQA). Residues 532–541 (SPPPPAPPPR) are compositionally biased toward pro residues. The span at 629–642 (LDDDDSDSDNEEGN) shows a compositional bias: acidic residues. Residues 778-1070 (SGEILCAALW…KFLCERNDKV (293 aa)) form the CNH domain.

Belongs to the protein kinase superfamily. STE Ser/Thr protein kinase family. STE20 subfamily.

It catalyses the reaction L-seryl-[protein] + ATP = O-phospho-L-seryl-[protein] + ADP + H(+). It carries out the reaction L-threonyl-[protein] + ATP = O-phospho-L-threonyl-[protein] + ADP + H(+). In terms of biological role, involved in cell migration and signal transduction. Important in several developmental processes including epidermal development, Q neuroblast migrations and muscle arm targeting. Required with ina-1/pat-3 to stabilize the commissural axons growth cone along a precise direction and are required for the cell to respond appropriately when signaling in the growth cone must change. During gonad morphogenesis, involved in distal tip cell (DTC) migration from the dorsal side of the hermaphrodite body to the midbody to allow for formation of gonad arms. This is Serine/threonine-protein kinase mig-15 (mig-15) from Caenorhabditis elegans.